The following is a 662-amino-acid chain: Leucine aminopeptidase 2 (662 aa).

Residues 178 to 180 (QLE) and 304 to 309 (PYGGME) contribute to the a peptide site. Position 333 (His-333) interacts with Zn(2+). The Proton acceptor role is filled by Glu-334. Positions 337 and 356 each coordinate Zn(2+). The active-site Proton donor is the Tyr-422.

It belongs to the peptidase M1 family. It depends on Zn(2+) as a cofactor.

The protein localises to the cytoplasm. It localises to the nucleus. It catalyses the reaction an epoxide + H2O = an ethanediol. Functionally, aminopeptidase that preferentially cleaves di- and tripeptides. Also has low epoxide hydrolase activity (in vitro). Can hydrolyze the epoxide leukotriene LTA(4) but it forms preferentially 5,6-dihydroxy-7,9,11,14-eicosatetraenoic acid rather than the cytokine leukotriene B(4) as the product compared to the homologous mammalian enzyme (in vitro). This Kluyveromyces lactis (strain ATCC 8585 / CBS 2359 / DSM 70799 / NBRC 1267 / NRRL Y-1140 / WM37) (Yeast) protein is Leucine aminopeptidase 2.